The primary structure comprises 262 residues: Indole-3-glycerol phosphate synthase (262 aa).

The protein belongs to the TrpC family.

It catalyses the reaction 1-(2-carboxyphenylamino)-1-deoxy-D-ribulose 5-phosphate + H(+) = (1S,2R)-1-C-(indol-3-yl)glycerol 3-phosphate + CO2 + H2O. The protein operates within amino-acid biosynthesis; L-tryptophan biosynthesis; L-tryptophan from chorismate: step 4/5. The polypeptide is Indole-3-glycerol phosphate synthase (Chlorobium luteolum (strain DSM 273 / BCRC 81028 / 2530) (Pelodictyon luteolum)).